Consider the following 128-residue polypeptide: Small ribosomal subunit protein eS8 (128 aa).

Belongs to the eukaryotic ribosomal protein eS8 family. As to quaternary structure, part of the 30S ribosomal subunit.

The polypeptide is Small ribosomal subunit protein eS8 (Methanococcus maripaludis (strain C5 / ATCC BAA-1333)).